We begin with the raw amino-acid sequence, 259 residues long: Flap endonuclease Xni (259 aa).

Aspartate 109 is a binding site for Mg(2+). Positions 165–255 (VKPQQLSDYW…FNLQDLRFTA (91 aa)) constitute a 5'-3' exonuclease domain. Leucine 176, isoleucine 187, and isoleucine 190 together coordinate K(+). The tract at residues 189 to 194 (GIGPKA) is interaction with DNA.

It belongs to the Xni family. It depends on Mg(2+) as a cofactor. The cofactor is K(+).

Functionally, has flap endonuclease activity. During DNA replication, flap endonucleases cleave the 5'-overhanging flap structure that is generated by displacement synthesis when DNA polymerase encounters the 5'-end of a downstream Okazaki fragment. This chain is Flap endonuclease Xni, found in Vibrio vulnificus (strain YJ016).